The sequence spans 118 residues: Small ribosomal subunit protein uS13 (118 aa).

Residues 94-118 are disordered; that stretch reads GLPVRGQRTKTNARTRKGPRKPIKK.

The protein belongs to the universal ribosomal protein uS13 family. In terms of assembly, part of the 30S ribosomal subunit. Forms a loose heterodimer with protein S19. Forms two bridges to the 50S subunit in the 70S ribosome.

Located at the top of the head of the 30S subunit, it contacts several helices of the 16S rRNA. In the 70S ribosome it contacts the 23S rRNA (bridge B1a) and protein L5 of the 50S subunit (bridge B1b), connecting the 2 subunits; these bridges are implicated in subunit movement. Contacts the tRNAs in the A and P-sites. The sequence is that of Small ribosomal subunit protein uS13 from Shigella dysenteriae serotype 1 (strain Sd197).